A 298-amino-acid chain; its full sequence is Single myb histone 2 (298 aa).

Residues 1 to 61 (MGVPKQRWTP…KWRNLSVTAG (61 aa)) form the HTH myb-type domain. A DNA-binding region (H-T-H motif) is located at residues 28-57 (WRTILRDSDFSALLRLRSNVDLKDKWRNLS). The H15 domain occupies 124-192 (SVARLDDLIV…KVNQKYRIAP (69 aa)). A coiled-coil region spans residues 237–278 (EEAAAFAAKAVAEAEVAMAEAEEAARVAEAAENDAEAAKAFL).

Belongs to the histone H1/H5 family. SMH subfamily. In terms of assembly, forms a homodimer and heterodimers.

It localises to the nucleus. The protein resides in the chromosome. It is found in the nucleolus. Its subcellular location is the telomere. In terms of biological role, binds preferentially double-stranded telomeric repeats, but may also bind to the single telomeric strand. In Zea mays (Maize), this protein is Single myb histone 2 (SMH2).